A 964-amino-acid polypeptide reads, in one-letter code: MASISDDGMALSGNLKKLKTMKKKFFVLYEETSTSSARLEYYDTEKKFLQRAEPKRVIYLKNCFNINRRLDTKHRFVIVLSSRDGGFGIVLENENDLRKWLDKLLVLQRNIANSNGTAHSPYDQVWQVVIQKKGISEKVGITGTYHCCLTSKSLTFVCIGPEKTPNGEDRVASIEILLTTIRRCGHASPQCIFYVELGRQSVLGSGDLWMETDNAAVATNMHNMILSAMSAKTESNTNLINVYQNRPDLSHEPMRKRSSSANEASKPINVNVIQNSQNSLELRSCSSPHNYGFSRERCDSLPTRNGTLSESSNQTYFGSNHGLRFNTISGIRPHSTNKHSNSPTFTMPLRCSESEDSSISVDESDDNGSFSHYRLNTRTSETAIPEENIDDFASAEFSKVTEPNESDENYIPMNPVNPTDAIHEKEKADLQRLEDASLHFNFPEHASEKLAKDFDLDSDNQCCRPIRAYSIGNKVEHLKFNKRLGHLNDTGQNPNRVRAYSVGSKSKIPRCDLQRVVLVEDNKHEFASNRSQSSIGKEGSSYGSSANRQKKSTSAPLLSLKNQINSDRMSDLMEIDFSQATNLEKQKFIKNNEIPKYIENVFPKAPRTDSSSLTLHATSQKDIFNGSKLNNTAITSEDGYLEMKPVGNGYTPSSNCLPIKVEKLKLSDYQTTAPPLLTATAAPVQDLNKISTYNISAEKWREQPSRSEEKKSNSPLNDNPFSLKPTNVESKSKSHDVHSANQIDCEKVCVQSDKLNNLTDKIVENNNLDIGGHEEKKLVHSISSEDYTQIKDKANDFTKFNEAGYKILQIKSDSSLISSKLYQKGMHKDNLERTHRLTESVNTIPDNATATVGSSSLTKFNINSVKPAADSRSTGTDPSTAQNILQIKDLNFPSRSSSRISQPELHYASLDLPHCSGQNPAKYLKRGSRESPPVSACPEDGNTYARIDFDQSDSSSSSSNIFNT.

Residues 8–109 (GMALSGNLKK…WLDKLLVLQR (102 aa)) enclose the PH domain. An IRS-type PTB domain is found at 122–236 (YDQVWQVVIQ…SAMSAKTESN (115 aa)). The segment at 249-268 (LSHEPMRKRSSSANEASKPI) is disordered. Serine 286, serine 287, and serine 342 each carry phosphoserine. Tyrosine 410 carries the post-translational modification Phosphotyrosine; by INSR. Positions 410 to 413 (YIPM) match the YXXM motif 1 motif. Residues 527–560 (ASNRSQSSIGKEGSSYGSSANRQKKSTSAPLLSL) are disordered. The span at 528–560 (SNRSQSSIGKEGSSYGSSANRQKKSTSAPLLSL) shows a compositional bias: polar residues. A Phosphoserine modification is found at serine 554. Positions 640 to 643 (YLEM) match the YXXM motif 2 motif. Over residues 698 to 712 (EKWREQPSRSEEKKS) the composition is skewed to basic and acidic residues. Residues 698–735 (EKWREQPSRSEEKKSNSPLNDNPFSLKPTNVESKSKSH) form a disordered region. Residues 713 to 729 (NSPLNDNPFSLKPTNVE) show a composition bias toward polar residues. Residue tyrosine 907 is modified to Phosphotyrosine; by INSR. The disordered stretch occupies residues 921–964 (AKYLKRGSRESPPVSACPEDGNTYARIDFDQSDSSSSSSNIFNT). Phosphoserine occurs at positions 928 and 931. Tyrosine 944 carries the phosphotyrosine; by INSR modification. A compositionally biased stretch (low complexity) spans 952 to 964 (SDSSSSSSNIFNT).

As to quaternary structure, bindings to phosphatidylinositol 3-kinase and SHP2.

Functionally, activates phosphatidylinositol 3-kinase when bound to the regulatory p85 subunit. May mediate the control of various cellular processes by insulin-like peptides. When phosphorylated by the insulin receptor binds specifically to various cellular proteins containing SH2 domains. Involved in control of cell proliferation, cell size, and body and organ growth throughout development. Also has a role in a signaling pathway controlling the physiological response required to endure periods of low nutrient conditions. Insulin/insulin-like growth factor (IGF) signaling pathway has a role in regulating aging and is necessary in the ovary for vitellogenic maturation. The chain is Insulin receptor substrate 1 from Drosophila sechellia (Fruit fly).